The chain runs to 450 residues: Divalent metal cation transporter MntH (450 aa).

11 helical membrane-spanning segments follow: residues 34-54 (LSFL…GNWI), 61-81 (AQYG…AMLL), 108-128 (IAII…IAEV), 141-161 (IPLI…LFIM), 170-190 (AIVG…VYIS), 212-232 (GILY…NLYL), 263-283 (IQLS…ASLF), 305-325 (PVLG…ALLA), 361-381 (SLAV…AAKI), 383-403 (QLLV…LIPL), and 422-442 (VNII…YLIV).

It belongs to the NRAMP family.

The protein resides in the cell membrane. H(+)-stimulated, divalent metal cation uptake system. The polypeptide is Divalent metal cation transporter MntH (Staphylococcus aureus (strain JH1)).